The primary structure comprises 215 residues: Urease accessory protein UreG 2 (215 aa).

Residue 11–18 (GPVGSGKT) participates in GTP binding.

It belongs to the SIMIBI class G3E GTPase family. UreG subfamily. Homodimer. UreD, UreF and UreG form a complex that acts as a GTP-hydrolysis-dependent molecular chaperone, activating the urease apoprotein by helping to assemble the nickel containing metallocenter of UreC. The UreE protein probably delivers the nickel.

The protein localises to the cytoplasm. In terms of biological role, facilitates the functional incorporation of the urease nickel metallocenter. This process requires GTP hydrolysis, probably effectuated by UreG. This is Urease accessory protein UreG 2 from Methylorubrum populi (strain ATCC BAA-705 / NCIMB 13946 / BJ001) (Methylobacterium populi).